The chain runs to 2336 residues: MNTTDCFIALLYALREIKAFLLSRTQGKMELTLYNGEKKTFYSRPNNHDNCWLNTILQLFRYVDEPFFDWVYDSPENLTCEAIRQLEEITGLELHEGGPPALVIWNIKHLLHTGIGTASRPSEVCMVDGTDMCLADFHAGIFLKGQEHAVFACVTSDGWYAIDDEDFYPWTPDPSDVLVFVPYDQEPLNGEWKAKVQKRLKGAGQSSPATGSQNQSGNTGSIINNYYMQQYQNSMDTQLGDNAISGGSNEGSTDTTSTHTTNTQNNDWFSKLASSAFSGLFGALLADKKTEETTLLEDRILTTRNGHTTSTTQSSVGVTYGYSTQEDHVSGPNTSGLETRVVQAERFFKKYLFDWTPDKAFGHLEKLELPTDHKGVYGHLVDSFAYMRNGWDVEVSAVGNQFNGGCLLVAMVPEWKELTPREKYQLTLFPHQFISPRTNMTAHIVVPYLGVNRYDQYKKHKPWTLVVMVVSPLTTNTVSAGQIKVYANIAPTHVHVAGELPSKEGIVPVACSDGYGGLVTTDPKTADPVYGMVYNPPRTNYPGRFTNLLDVAEACPTFLCFDDGKPYVVTRTDEQRLLAKFDLSLAAKHMSNTYLSGIAQYYAQYSGTINLHFMFTGSTDSKARYMVAYVPPGVETPPDTPEKAAHCIHAEWDTGLNSKFTFSIPYVSAADYAYTASDVAETTNVQGWVCIYQITHGKAEQDTLVVSVSAGKDFELRLPIDPRSQTTSTGESADPVTTTVENYGGETQVQRRQHTDVTFIMDRFVKIQNLNPIHVIDLMQTHQHGLVGALLRAATYYFSDLEIVVRHDGNLTWVPNGAPEAALSNMGNPTAYPKAPFTRLALPYTAPHRVLATVYNGTGKYSAGGMGRRGDLEPLAARVAAQLPTSFNFGAIQATTIHELLVRMKRAELYCPRPLLAVEVSSQDRHKQKIIAPAKQLLNFDLLKLAGDVESNPGPFFFSDVRSNFSKLVETINQMQEDMSTKHGPDFNRLVSAFEELATGVKAIRTGLDEAKPWYKLIKLLSRLSCMAAVAARSKDPVLVAIMLADTGLEILDSTFVVKKISDSLSSLFHVPAPVFSFGAPILLAGLVKVASSFFRSTPEDLERAEKQLKARDINDIFAILKNGEWLVKLILAIRDWIKAWIASEEKFVTMTDLVPGILEKQRDLNDPSKYKEAKEWLDSARQACLKNGNVHIANLCKVVTPAPSKSRPEPVVVCLRGKSGQGKSFLANVLAQAISTHFTGRIDSVWYCPPDPDHFDGYNQQTVVVMDDLGQNPDGKDFKYFAQMVSTTGFIPPMASLEDKGKPFNSKVIITTTNLYSGFTPRTMVCPDALNRRFHFDIDVSAKDGYKVNNKLDITKALEDTHTNPVAMFKYDCALLNGMAVEMKRMQQDMFKPQPPLQNVYQLVQEVIERVELHEKVSSHQIFKQISIPSQKSVLYFLIEKGQHEAAIEFFEGLVHDSIKEELRPLIQQTSFVKRAFKRLKENFEIVALCLTLLANIVIMIRETRKRQQMVDDAVNEYIEKANITTDDKTLDEAEKNPLETSGVSIVGFRERTLPGHRASDDVNSEPARPVEEQPQAEGPYTGPLERQKPLKVKAKLPQQEGPYAGPMERQKPLKVKVKAPVVKEGPYEGPVKKPVALKVKAKNLIVTESGAPPTDLQKMVMGNTKPVELILDGKTVAICCATGVFGTAYLVPRHLFAEKYDKIMLDGRAMTDSDYRVFEFEIKVKGQDMLSDAALMVLHRGNRVRDITKHFRDTARMKKGTPVVGVINNADVGRLIFSGEALTYKDIVVCMDGDTMPGLFAYKAATKAGYCGGAVLAKDGADTFIVGTHSAGGNGVGYCSCVSRSMLLKMKAHIDPEPHHEGLIVDTRDVEERVHVMRKTKLAPTVAHGVFNPEFGPAALSNKDPRLNEGVVLDEVIFSKHKGDTKMTEEDKALFRRCAADYASRLHNVLGTANAPLSIYEAIKGVDGLDAMEPDTAPGLPWALQGKRRGTLIDFENGTVGPEVASALELMEKRQYKFTCQTFLKDEVRPMEKVRAGKTRIVDVLPVEHILYTRMMIGRFCAQMHSNNGPQIGSAVGCNPDVDWQRFGTHFAQYKNVWDVDYSAFDANHCSDAMNIMFEEVFRTEFGFHPNAEWILKTLVNTEHAYENKRITVEGGMPSGCSATSIINTILNNIYVLYALRRHYEGVELDTYTMISYGDDIVVASDYDLDFEALKPHFKSLGQTITPADKSDKGFVLGQSITDVTFLKRHFRMDYGTGFYKPVMASKTLEAILSFARRGTIQEKLISVAGLAVHSGPDEYRRLFEPFQGLFEIPSYRSLYLRWVNAVCGDAQSL.

One can recognise a Peptidase C28 domain in the interval 1-201 (MNTTDCFIAL…WKAKVQKRLK (201 aa)). Residues 1–1481 (MNTTDCFIAL…SFVKRAFKRL (1481 aa)) are Cytoplasmic-facing. Active-site for leader protease activity residues include cysteine 51, histidine 148, and aspartate 163. Disordered regions lie at residues 197–218 (QKRLKGAGQSSPATGSQNQSGN) and 238–265 (QLGDNAISGGSNEGSTDTTSTHTTNTQN). A lipid anchor (N-myristoyl glycine; by host) is attached at glycine 202. 2 stretches are compositionally biased toward polar residues: residues 204-218 (GQSSPATGSQNQSGN) and 238-251 (QLGDNAISGGSNEG). Positions 252 to 265 (STDTTSTHTTNTQN) are enriched in low complexity. The tract at residues 789-797 (ALLRAATYY) is antigenic epitope. The Cell attachment site signature appears at 869–871 (RGD). Residues 1190–1354 (NVHIANLCKV…DGYKVNNKLD (165 aa)) form the SF3 helicase domain. Residue 1218–1225 (GKSGQGKS) coordinates ATP. The stretch at 1482 to 1502 (KENFEIVALCLTLLANIVIMI) is an intramembrane region. The Cytoplasmic portion of the chain corresponds to 1503–2336 (RETRKRQQMV…NAVCGDAQSL (834 aa)). The disordered stretch occupies residues 1556–1591 (PGHRASDDVNSEPARPVEEQPQAEGPYTGPLERQKP). Tyrosine 1582, tyrosine 1605, and tyrosine 1629 each carry O-(5'-phospho-RNA)-tyrosine. Residues 1653–1849 (APPTDLQKMV…YCSCVSRSML (197 aa)) form the Peptidase C3 domain. Histidine 1696 acts as the For protease 3C activity; Proton donor/acceptor in catalysis. Catalysis depends on for protease 3C activity residues aspartate 1734 and cysteine 1813. The Nuclear localization signal motif lies at 1879–1887 (MRKTKLAPT). Residues 2097-2215 (KNVWDVDYSA…ASDYDLDFEA (119 aa)) form the RdRp catalytic domain. The active-site For RdRp activity is aspartate 2201.

This sequence belongs to the picornaviruses polyprotein family. As to quaternary structure, interacts with host ISG15. Interacts (via R-G-D motif) with host ITGAV/ITGB6. Interacts with host MAVS; this interaction inhibits binding of host TRAF3 to MAVS, thereby suppressing interferon-mediated responses. In terms of assembly, forms homooligomers. As to quaternary structure, homohexamer. Interacts with host VIM. Interacts with host BECN1. Interacts with host DCTN3. In terms of assembly, interacts with RNA-dependent RNA polymerase; this interaction allows 3B-1 to binds 2 polymerases and act as a primer. It also allows the recruitment of the RNA-dependent RNA polymerase to host membranes. As to quaternary structure, interacts with RNA-dependent RNA polymerase; this interaction allows 3B-2 to act as a primer. Interacts with RNA-dependent RNA polymerase; this interaction allows 3B-3 to act as a primer. In terms of assembly, interacts with 3B-1; this interaction allows 3B-1 to binds 2 polymerases and act as a primer. It also allows the recruitment of the RNA-dependent RNA polymerase to host membranes. Interacts with 3B-2; this interaction allows 3B-2 to act as a primer. Interacts with 3B-3; this interaction allows 3B-3 to act as a primer. Post-translationally, removes six residues from its own C-terminus, generating sLb(pro). In terms of processing, specific enzymatic cleavages in vivo by the viral proteases yield a variety of precursors and mature proteins. The polyprotein seems to be cotranslationally cleaved at the 2A/2B junction by a ribosomal skip from one codon to the next without formation of a peptide bond. This process would release the L-P1-2A peptide from the translational complex. During virion maturation, immature virions are rendered infectious following cleavage of VP0 into VP4 and VP2. This maturation seems to be an autocatalytic event triggered by the presence of RNA in the capsid and is followed by a conformational change of the particle. Post-translationally, myristoylation is required during RNA encapsidation and formation of the mature virus particle. In terms of processing, uridylylated by the polymerase and covalently linked to the 5'-end of genomic RNA. These uridylylated forms act as a nucleotide-peptide primer for the polymerase.

It is found in the host nucleus. The protein localises to the host cytoplasm. It localises to the virion. Its subcellular location is the host endoplasmic reticulum membrane. The protein resides in the host cytoplasmic vesicle membrane. The enzyme catalyses Autocatalytically cleaves itself from the polyprotein of the foot-and-mouth disease virus by hydrolysis of a Lys-|-Gly bond, but then cleaves host cell initiation factor eIF-4G at bonds -Gly-|-Arg- and -Lys-|-Arg-.. The catalysed reaction is a ribonucleoside 5'-triphosphate + H2O = a ribonucleoside 5'-diphosphate + phosphate + H(+). It carries out the reaction RNA(n) + a ribonucleoside 5'-triphosphate = RNA(n+1) + diphosphate. It catalyses the reaction Selective cleavage of Gln-|-Gly bond in the poliovirus polyprotein. In other picornavirus reactions Glu may be substituted for Gln, and Ser or Thr for Gly.. Autocatalytically cleaves itself from the polyprotein at the L/VP0 junction. Also cleaves the host translation initiation factors EIF4G1 and EIF4G3, in order to shut off the capped cellular mRNA transcription. Plays a role in counteracting host innate antiviral response using diverse mechanisms. Possesses a deubiquitinase activity acting on both 'Lys-48' and 'Lys-63'-linked polyubiquitin chains. In turn, inhibits the ubiquitination and subsequent activation of key signaling molecules of type I IFN response such as host RIGI, TBK1, TRAF3 and TRAF6. Inhibits host NF-kappa-B activity by inducing a decrease in RELA mRNA levels. Cleaves a peptide bond in the C-terminus of host ISG15, resulting in the damaging of this modifier that can no longer be attached to target proteins. Also cleaves host G3BP1 and G3BP2 in order to inhibit cytoplasmic stress granules assembly. Functionally, lies on the inner surface of the capsid shell. After binding to the host receptor, the capsid undergoes conformational changes. Capsid protein VP4 is released, capsid protein VP1 N-terminus is externalized, and together, they shape a pore in the host membrane through which the viral genome is translocated into the host cell cytoplasm. After genome has been released, the channel shrinks. In terms of biological role, forms an icosahedral capsid of pseudo T=3 symmetry with capsid proteins VP1 and VP3. The capsid is composed of 60 copies of each capsid protein organized in the form of twelve pentamers and encloses the viral positive strand RNA genome. Upon acidifcation in the endosome, dissociates into pentamers. Its function is as follows. Forms an icosahedral capsid of pseudo T=3 symmetry with capsid proteins VP0 and VP3. The capsid is composed of 60 copies of each capsid protein organized in the form of twelve pentamers and encloses the viral positive strand RNA genome. Upon acidifcation in the endosome, dissociates into pentamers. Forms an icosahedral capsid of pseudo T=3 symmetry with capsid proteins VP2 and VP3. The capsid is composed of 60 copies of each capsid protein organized in the form of twelve pentamers and encloses the viral positive strand RNA genome. Mediates cell entry by attachment to an integrin receptor, usually host ITGAV/ITGB6. In addition, targets host MAVS to suppress type I IFN pathway. Upon acidifcation in the endosome, dissociates into pentamers. Functionally, mediates self-processing of the polyprotein by a translational effect termed 'ribosome skipping'. Mechanistically, 2A-mediated cleavage occurs between the C-terminal glycine and the proline of the downstream protein 2B. In the case of foot-and-mouth disease virus, the 2A oligopeptide is post-translationally 'trimmed' from the C-terminus of the upstream protein 1D by 3C proteinase. In terms of biological role, plays an essential role in the virus replication cycle by acting as a viroporin. Creates a pore in the host endoplasmic reticulum and as a consequence releases Ca2+ in the cytoplasm of infected cell. In turn, high levels of cytoplasmic calcium may trigger membrane trafficking and transport of viral ER-associated proteins to viroplasms, sites of viral genome replication. Its function is as follows. Associates with and induces structural rearrangements of intracellular membranes. Triggers host autophagy by interacting with host BECN1 and thereby promotes viral replication. Participates in viral replication and interacts with host DHX9. Displays RNA-binding, nucleotide binding and NTPase activities. May play a role in virion morphogenesis and viral RNA encapsidation by interacting with the capsid protein VP3. Plays important roles in virus replication, virulence and host range. Cooperates with host DDX56 to inhibit IRF3 nuclear translocation and subsequent type I interferon production. Functionally, covalently linked to the 5'-end of both the positive-strand and negative-strand genomic RNAs. Acts as a genome-linked replication primer. In terms of biological role, cysteine protease that generates mature viral proteins from the precursor polyprotein. In addition to its proteolytic activity, binds to viral RNA and thus influences viral genome replication. RNA and substrate bind cooperatively to the protease. Its function is as follows. RNA-directed RNA polymerase 3D-POL replicates genomic and antigenomic RNA by recognizing replications specific signals. Covalently attaches UMP to a tyrosine of VPg, which is used to prime RNA synthesis. The positive stranded RNA genome is first replicated at virus induced membranous vesicles, creating a dsRNA genomic replication form. This dsRNA is then used as template to synthesize positive stranded RNA genomes. ss(+)RNA genomes are either translated, replicated or encapsidated. The sequence is that of Genome polyprotein from Foot-and-mouth disease virus (isolate -/Azerbaijan/A22-550/1965 serotype A) (FMDV).